An 88-amino-acid polypeptide reads, in one-letter code: Small ribosomal subunit protein uS15 (88 aa).

Belongs to the universal ribosomal protein uS15 family. Part of the 30S ribosomal subunit. Forms a bridge to the 50S subunit in the 70S ribosome, contacting the 23S rRNA.

Functionally, one of the primary rRNA binding proteins, it binds directly to 16S rRNA where it helps nucleate assembly of the platform of the 30S subunit by binding and bridging several RNA helices of the 16S rRNA. Its function is as follows. Forms an intersubunit bridge (bridge B4) with the 23S rRNA of the 50S subunit in the ribosome. The sequence is that of Small ribosomal subunit protein uS15 from Mycoplasmopsis synoviae (strain 53) (Mycoplasma synoviae).